The chain runs to 360 residues: Photosystem II protein D1 2 (360 aa).

Residues 1-31 (MTTTLQQRESASLWEQFCQWVTSTNNRIYVG) lie on the Cytoplasmic side of the membrane. The helical transmembrane segment at 32–53 (WFGTLMIPTLLTATTCFIIAFI) threads the bilayer. Residues 54 to 110 (AAPPVDIDGIREPVAGSLLYGNNIISGAVVPSSNAIGLHFYPIWEAASLDEWLYNGG) are Lumenal, thylakoid-facing. A helical membrane pass occupies residues 111-134 (PYQLVVFHFLIGIFCYMGRQWELS). His-118 is a binding site for chlorophyll a. Tyr-126 provides a ligand contact to pheophytin a. Residues 135–142 (YRLGMRPW) are Cytoplasmic-facing. A helical transmembrane segment spans residues 143 to 161 (ICVAYSAPVSAATAVFLIY). Tyr-147 contributes to the pheophytin a binding site. Over 162-191 (PIGQGSFSDGMPLGISGTFNFMIVFQAEHN) the chain is Lumenal, thylakoid. [CaMn4O5] cluster contacts are provided by Asp-170 and Glu-189. A helical transmembrane segment spans residues 192–218 (ILMHPFHMLGVAGVFGGSLFSAMHGSL). Residue His-198 participates in chlorophyll a binding. A quinone-binding residues include His-215, Ser-264, and Phe-265. His-215 provides a ligand contact to Fe cation. Residues 219-270 (VTSSLVRETTEVESQNYGYKFGQEEETYNIVAAHGYFGRLIFQYASFNNSRS) are Cytoplasmic-facing. A helical transmembrane segment spans residues 271-295 (LHFFLGAWPVIGIWFTAMGVSTMAF). His-272 contacts Fe cation. Residues 296 to 360 (NLNGFNFNQS…VALTAPAVNG (65 aa)) are Lumenal, thylakoid-facing. The [CaMn4O5] cluster site is built by His-332, Glu-333, His-337, Asp-342, and Ala-344. Positions 345–360 (SGEQAPVALTAPAVNG) are excised as a propeptide.

The protein belongs to the reaction center PufL/M/PsbA/D family. In terms of assembly, PSII is composed of 1 copy each of membrane proteins PsbA, PsbB, PsbC, PsbD, PsbE, PsbF, PsbH, PsbI, PsbJ, PsbK, PsbL, PsbM, PsbT, PsbX, PsbY, PsbZ, Psb30/Ycf12, peripheral proteins PsbO, CyanoQ (PsbQ), PsbU, PsbV and a large number of cofactors. It forms dimeric complexes. The D1/D2 heterodimer binds P680, chlorophylls that are the primary electron donor of PSII, and subsequent electron acceptors. It shares a non-heme iron and each subunit binds pheophytin, quinone, additional chlorophylls, carotenoids and lipids. D1 provides most of the ligands for the Mn4-Ca-O5 cluster of the oxygen-evolving complex (OEC). There is also a Cl(-1) ion associated with D1 and D2, which is required for oxygen evolution. The PSII complex binds additional chlorophylls, carotenoids and specific lipids. serves as cofactor. C-terminally processed by CtpA; processing is essential to allow assembly of the oxygen-evolving complex and photosynthetic growth. In terms of processing, tyr-161 forms a radical intermediate that is referred to as redox-active TyrZ, YZ or Y-Z.

Its subcellular location is the cellular thylakoid membrane. The catalysed reaction is 2 a plastoquinone + 4 hnu + 2 H2O = 2 a plastoquinol + O2. Its function is as follows. Photosystem II (PSII) is a light-driven water:plastoquinone oxidoreductase that uses light energy to abstract electrons from H(2)O, generating O(2) and a proton gradient subsequently used for ATP formation. It consists of a core antenna complex that captures photons, and an electron transfer chain that converts photonic excitation into a charge separation. The D1/D2 (PsbA/PsbD) reaction center heterodimer binds P680, the primary electron donor of PSII as well as several subsequent electron acceptors. The polypeptide is Photosystem II protein D1 2 (Synechocystis sp. (strain ATCC 27184 / PCC 6803 / Kazusa)).